A 197-amino-acid polypeptide reads, in one-letter code: Imidazoleglycerol-phosphate dehydratase (197 aa).

The protein belongs to the imidazoleglycerol-phosphate dehydratase family.

Its subcellular location is the cytoplasm. It carries out the reaction D-erythro-1-(imidazol-4-yl)glycerol 3-phosphate = 3-(imidazol-4-yl)-2-oxopropyl phosphate + H2O. It functions in the pathway amino-acid biosynthesis; L-histidine biosynthesis; L-histidine from 5-phospho-alpha-D-ribose 1-diphosphate: step 6/9. In Thermobifida fusca (strain YX), this protein is Imidazoleglycerol-phosphate dehydratase.